The primary structure comprises 354 residues: Chaperone protein dnaJ 49 (354 aa).

A J domain is found at 99–163 (DYYAILGLEK…NSRRQFDQVG (65 aa)). A helical transmembrane segment spans residues 237–257 (CLTIIQILPFFLLLLLAYLPF).

It belongs to the DnaJ family. C/III subfamily.

The protein resides in the membrane. Plays a continuous role in plant development probably in the structural organization of compartments. The protein is Chaperone protein dnaJ 49 (ATJ49) of Arabidopsis thaliana (Mouse-ear cress).